Consider the following 193-residue polypeptide: Xanthine phosphoribosyltransferase (193 aa).

2 residues coordinate xanthine: Leu-20 and Asn-27. Position 129–133 (129–133) interacts with 5-phospho-alpha-D-ribose 1-diphosphate; that stretch reads ANGKA. Residue Lys-157 participates in xanthine binding.

The protein belongs to the purine/pyrimidine phosphoribosyltransferase family. Xpt subfamily. As to quaternary structure, homodimer.

Its subcellular location is the cytoplasm. The enzyme catalyses XMP + diphosphate = xanthine + 5-phospho-alpha-D-ribose 1-diphosphate. The protein operates within purine metabolism; XMP biosynthesis via salvage pathway; XMP from xanthine: step 1/1. In terms of biological role, converts the preformed base xanthine, a product of nucleic acid breakdown, to xanthosine 5'-monophosphate (XMP), so it can be reused for RNA or DNA synthesis. The sequence is that of Xanthine phosphoribosyltransferase from Bifidobacterium longum (strain NCC 2705).